The primary structure comprises 409 residues: Dual-specificity RNA methyltransferase RlmN (409 aa).

The active-site Proton acceptor is the Glu-126. The 242-residue stretch at 132 to 373 folds into the Radical SAM core domain; it reads EEGRGTLCLS…NQAGYASPIR (242 aa). The cysteines at positions 139 and 384 are disulfide-linked. Cys-146, Cys-150, and Cys-153 together coordinate [4Fe-4S] cluster. S-adenosyl-L-methionine contacts are provided by residues 210 to 211, Ser-242, 264 to 266, and Asn-341; these read GE and SLH. Cys-384 (S-methylcysteine intermediate) is an active-site residue.

The protein belongs to the radical SAM superfamily. RlmN family. The cofactor is [4Fe-4S] cluster.

It localises to the cytoplasm. The catalysed reaction is adenosine(2503) in 23S rRNA + 2 reduced [2Fe-2S]-[ferredoxin] + 2 S-adenosyl-L-methionine = 2-methyladenosine(2503) in 23S rRNA + 5'-deoxyadenosine + L-methionine + 2 oxidized [2Fe-2S]-[ferredoxin] + S-adenosyl-L-homocysteine. The enzyme catalyses adenosine(37) in tRNA + 2 reduced [2Fe-2S]-[ferredoxin] + 2 S-adenosyl-L-methionine = 2-methyladenosine(37) in tRNA + 5'-deoxyadenosine + L-methionine + 2 oxidized [2Fe-2S]-[ferredoxin] + S-adenosyl-L-homocysteine. Its function is as follows. Specifically methylates position 2 of adenine 2503 in 23S rRNA and position 2 of adenine 37 in tRNAs. m2A2503 modification seems to play a crucial role in the proofreading step occurring at the peptidyl transferase center and thus would serve to optimize ribosomal fidelity. The protein is Dual-specificity RNA methyltransferase RlmN of Bartonella quintana (strain Toulouse) (Rochalimaea quintana).